A 326-amino-acid chain; its full sequence is Fos-related antigen 2 (326 aa).

Methionine 1 carries the N-acetylmethionine modification. The interval 1 to 39 (MYQDYPGNFDTSSRGSSGSPAHAESYSSGGGGQQKFRVD) is disordered. Over residues 9 to 19 (FDTSSRGSSGS) the composition is skewed to polar residues. Lysine 35 participates in a covalent cross-link: Glycyl lysine isopeptide (Lys-Gly) (interchain with G-Cter in SUMO2). Lysine 104 carries the N6-acetyllysine; alternate modification. Residue lysine 104 forms a Glycyl lysine isopeptide (Lys-Gly) (interchain with G-Cter in SUMO2); alternate linkage. Disordered regions lie at residues 111 to 131 (GRRR…RIRR), 193 to 244 (ISPE…QRSV), and 289 to 326 (EQES…LLAL). At serine 120 the chain carries Phosphoserine. The bZIP domain maps to 124–187 (EEKRRIRRER…EKLEFMLVAH (64 aa)). The interval 126-128 (KRR) is basic motif. The leucine-zipper stretch occupies residues 129–136 (IRRERNKL). Serine 200 bears the Phosphoserine mark. Residues 201 to 211 (PPTSGLQSLRG) show a composition bias toward polar residues. Lysine 222 is covalently cross-linked (Glycyl lysine isopeptide (Lys-Gly) (interchain with G-Cter in SUMO2); alternate). Lysine 222 is covalently cross-linked (Glycyl lysine isopeptide (Lys-Gly) (interchain with G-Cter in SUMO1); alternate). Residue serine 230 is modified to Phosphoserine. Residue lysine 239 forms a Glycyl lysine isopeptide (Lys-Gly) (interchain with G-Cter in SUMO2) linkage. A phosphoserine mark is found at serine 308 and serine 320. Over residues 308 to 320 (SSSGDQSSDSLNS) the composition is skewed to low complexity.

It belongs to the bZIP family. Fos subfamily. In terms of assembly, heterodimer. Interacts with the BAF multiprotein chromatin-remodeling complex subunits SMARCB1 and SMARCD1. Interacts with ARID1A and JUN. Expressed in the brain cortex. Expressed at night in pineal gland (at protein level). Also expressed in osteoblasts (at protein level).

It localises to the nucleus. Controls osteoclast survival and size. As a dimer with JUN, activates LIF transcription. Activates CEBPB transcription in PGE2-activated osteoblasts. This is Fos-related antigen 2 (Fosl2) from Rattus norvegicus (Rat).